The primary structure comprises 119 residues: Large ribosomal subunit protein uL22 (119 aa).

Belongs to the universal ribosomal protein uL22 family. In terms of assembly, part of the 50S ribosomal subunit.

This protein binds specifically to 23S rRNA; its binding is stimulated by other ribosomal proteins, e.g. L4, L17, and L20. It is important during the early stages of 50S assembly. It makes multiple contacts with different domains of the 23S rRNA in the assembled 50S subunit and ribosome. In terms of biological role, the globular domain of the protein is located near the polypeptide exit tunnel on the outside of the subunit, while an extended beta-hairpin is found that lines the wall of the exit tunnel in the center of the 70S ribosome. The chain is Large ribosomal subunit protein uL22 from Chlorobium phaeovibrioides (strain DSM 265 / 1930) (Prosthecochloris vibrioformis (strain DSM 265)).